Consider the following 418-residue polypeptide: UDP-N-acetylglucosamine 1-carboxyvinyltransferase (418 aa).

Residue 22–23 participates in phosphoenolpyruvate binding; that stretch reads KN. R92 contacts UDP-N-acetyl-alpha-D-glucosamine. Residue C116 is the Proton donor of the active site. 2-(S-cysteinyl)pyruvic acid O-phosphothioketal is present on C116. UDP-N-acetyl-alpha-D-glucosamine is bound by residues 121–125, D305, and L327; that span reads RPIDL.

This sequence belongs to the EPSP synthase family. MurA subfamily.

It localises to the cytoplasm. It catalyses the reaction phosphoenolpyruvate + UDP-N-acetyl-alpha-D-glucosamine = UDP-N-acetyl-3-O-(1-carboxyvinyl)-alpha-D-glucosamine + phosphate. The protein operates within cell wall biogenesis; peptidoglycan biosynthesis. In terms of biological role, cell wall formation. Adds enolpyruvyl to UDP-N-acetylglucosamine. This Campylobacter jejuni (strain RM1221) protein is UDP-N-acetylglucosamine 1-carboxyvinyltransferase.